The following is a 163-amino-acid chain: MARLTHFDGDGQAHMVDVSGKAVTDRIAVADCYIKMTTQTLDLVEQGTAKKGDVLGVARLAGIMGAKKCADLIPLCHPLPITKVAVDLVPDASLPGVRITATVKTSGQTGVEMEALTAASTAALTVYDMLKAAEKTMEIGGLRVVLKDGGKSGRFEAPEGSAP.

Residues 75–77 and 113–114 each bind substrate; these read LCH and ME. Residue aspartate 128 is part of the active site.

The protein belongs to the MoaC family. Homohexamer; trimer of dimers.

It catalyses the reaction (8S)-3',8-cyclo-7,8-dihydroguanosine 5'-triphosphate = cyclic pyranopterin phosphate + diphosphate. It participates in cofactor biosynthesis; molybdopterin biosynthesis. Its function is as follows. Catalyzes the conversion of (8S)-3',8-cyclo-7,8-dihydroguanosine 5'-triphosphate to cyclic pyranopterin monophosphate (cPMP). This chain is Cyclic pyranopterin monophosphate synthase, found in Jannaschia sp. (strain CCS1).